The sequence spans 86 residues: Large ribosomal subunit protein bL31B (86 aa).

It belongs to the bacterial ribosomal protein bL31 family. Type B subfamily. Part of the 50S ribosomal subunit.

The chain is Large ribosomal subunit protein bL31B from Vibrio campbellii (strain ATCC BAA-1116).